Reading from the N-terminus, the 326-residue chain is Protein-arginine N-acetylglucosaminyltransferase NleB2 (326 aa).

UDP-N-acetyl-alpha-D-glucosamine-binding positions include 45–47, Tyr69, and 216–219; these read QWF and YLDM. A DXD motif motif is present at residues 218–220; that stretch reads DMD. A Mn(2+)-binding site is contributed by Asp220. The active-site Proton acceptor is Glu250. 2 residues coordinate Mn(2+): Asn317 and Ser319. UDP-N-acetyl-alpha-D-glucosamine-binding positions include Ser319 and 324 to 326; that span reads SSW.

It belongs to the glycosyltransferase NleB family. It depends on Mn(2+) as a cofactor.

It is found in the secreted. The protein resides in the host cell. The catalysed reaction is L-arginyl-[protein] + UDP-N-acetyl-alpha-D-glucosamine = N(omega)-(N-acetyl-beta-D-glucosaminyl)-L-arginyl-[protein] + UDP + H(+). Its function is as follows. Protein-arginine N-acetylglucosaminyltransferase effector that catalyzes the transfer of a single N-acetylglucosamine (GlcNAc) to a conserved arginine residue of host target proteins. In contrast to NleB1, not able to disrupt TNF signaling in infected cells. Shows a lower enzymatic activity than NleB1. The sequence is that of Protein-arginine N-acetylglucosaminyltransferase NleB2 from Escherichia coli O145:H28 (strain RM12581).